The chain runs to 161 residues: Regulator of ribonuclease activity A (161 aa).

Belongs to the RraA family. As to quaternary structure, homotrimer. Binds to both RNA-binding sites in the C-terminal region of Rne and to RhlB.

The protein localises to the cytoplasm. Its function is as follows. Globally modulates RNA abundance by binding to RNase E (Rne) and regulating its endonucleolytic activity. Can modulate Rne action in a substrate-dependent manner by altering the composition of the degradosome. Modulates RNA-binding and helicase activities of the degradosome. This chain is Regulator of ribonuclease activity A, found in Enterobacter sp. (strain 638).